Reading from the N-terminus, the 171-residue chain is SWR1 complex subunit 6 (171 aa).

The segment at 63–87 (DEDDDLGYLQKKQHKGSKRKTRQAK) is disordered. Basic residues predominate over residues 73–85 (KKQHKGSKRKTRQ). 8 residues coordinate Zn(2+): Cys134, Cys137, Cys145, Cys148, Cys153, Cys157, His161, and Cys166. The segment at 134–166 (CSVCGYIAGYNCCLCGMRFCSIRCQNIHKDTRC) adopts an HIT-type zinc-finger fold.

Belongs to the ZNHIT1 family. As to quaternary structure, homodimer. Component of the SWR1 chromatin-remodeling complex composed of at least ARP6/ESD1/SUF3, PIE1, SWC6, SWC2 and H2AZs (HTA8, HTA9, HTA11). Interacts directly with ARP6, PIE1 and SWC2. Interacts with FLX and SUF4, two component of the transcription activator complex FRI-C, and with ASHH2 and TAF14. Expressed in root, lateral root primordia, shoot apex, leaves, stems, inflorescences, flowers, axillary buds, developing siliques and premature seeds.

The protein resides in the nucleus speckle. It is found in the nucleus. Its function is as follows. Component of the SWR1 complex which mediates the ATP-dependent exchange of histone H2A for the H2A variant H2A.F/Z leading to transcriptional regulation of selected genes (e.g. FLC) by chromatin remodeling. Coodinates SWR1-C, FRI-C (FLC transcription activator complex), histone methyltransferase and general transcription factors. Represses flowering by positively regulating FLC and MAF4. Binds to the promoter region of FLC chromatin. The protein is SWR1 complex subunit 6 (SWC6) of Arabidopsis thaliana (Mouse-ear cress).